The sequence spans 533 residues: Putative replication factor C large subunit (533 aa).

A compositionally biased stretch (polar residues) spans 1-11; sequence MSKTAKNTKTI. The tract at residues 1-31 is disordered; that stretch reads MSKTAKNTKTIKSVKSVNKDNKPNKDNKDDK. Residues 17–31 show a composition bias toward basic and acidic residues; that stretch reads VNKDNKPNKDNKDDK.

This sequence belongs to the activator 1 large subunit family.

Part of the RFC clamp loader complex which loads the PCNA sliding clamp onto DNA. The protein is Putative replication factor C large subunit of Acanthamoeba polyphaga (Amoeba).